The chain runs to 101 residues: Small ribosomal subunit protein bS18c (101 aa).

Residues 1-19 show a composition bias toward basic residues; that stretch reads MNKSKRPFTKSKRSFRRRL. The segment at 1–20 is disordered; that stretch reads MNKSKRPFTKSKRSFRRRLP.

It belongs to the bacterial ribosomal protein bS18 family. In terms of assembly, part of the 30S ribosomal subunit.

The protein resides in the plastid. It is found in the chloroplast. The chain is Small ribosomal subunit protein bS18c from Arabis hirsuta (Hairy rock-cress).